Reading from the N-terminus, the 448-residue chain is Methionine aminopeptidase 2 (448 aa).

The segment at 1–47 (MTSSVDKVSQKVADVKLGSSKSTKNNKSKGKGKSNKNQVVEDDDEDD) is disordered. Over residues 24–34 (KNNKSKGKGKS) the composition is skewed to basic residues. Residue histidine 198 participates in substrate binding. A divalent metal cation contacts are provided by aspartate 218, aspartate 229, and histidine 298. Histidine 306 lines the substrate pocket. The a divalent metal cation site is built by glutamate 331 and glutamate 429.

The protein belongs to the peptidase M24A family. Methionine aminopeptidase eukaryotic type 2 subfamily. Co(2+) serves as cofactor. The cofactor is Zn(2+). Requires Mn(2+) as cofactor. Fe(2+) is required as a cofactor.

The protein resides in the cytoplasm. It catalyses the reaction Release of N-terminal amino acids, preferentially methionine, from peptides and arylamides.. Its function is as follows. Cotranslationally removes the N-terminal methionine from nascent proteins. The N-terminal methionine is often cleaved when the second residue in the primary sequence is small and uncharged (Met-Ala-, Cys, Gly, Pro, Ser, Thr, or Val). The polypeptide is Methionine aminopeptidase 2 (Komagataella phaffii (strain GS115 / ATCC 20864) (Yeast)).